Consider the following 172-residue polypeptide: Chromosome-anchoring protein RacA (172 aa).

The segment at residues 5 to 25 is a DNA-binding region (H-T-H motif); that stretch reads TSDVAIRLGVSPKTIQRWVRK. Disordered regions lie at residues 57 to 76 and 142 to 172; these read AAME…RNNI and QLNN…GLFA. Pro residues predominate over residues 62–71; it reads PPTPKRPPTP. The stretch at 83-146 forms a coiled coil; sequence ESIEPEIARV…ARLEQQLNNR (64 aa). The span at 142-151 shows a compositional bias: polar residues; it reads QLNNRPPSSH.

This sequence belongs to the RacA family.

It localises to the cytoplasm. Its function is as follows. Required for the formation of axial filaments and for anchoring the origin regions at the cell poles in sporulating cells, thus ensuring proper chromosome segregation in the prespore. Binds in a dispersed manner throughout the chromosome but preferentially to sites clustered in the origin portion of the chromosome, causing condensation of the chromosome and its remodeling into an elongated, anchored structure. The sequence is that of Chromosome-anchoring protein RacA from Geobacillus kaustophilus (strain HTA426).